Here is a 796-residue protein sequence, read N- to C-terminus: Potassium transporter 10 (796 aa).

The segment at 1 to 30 (MAGRVESSIGGGEIDEEGDERGSMWDLDQS) is disordered. Over 1-58 (MAGRVESSIGGGEIDEEGDERGSMWDLDQSLDQPMDEEAGRLRNMYREKKFSAFLLLQ) the chain is Cytoplasmic. Residues 59-79 (LSFQSLGVVYGDLGTSPLYVF) form a helical membrane-spanning segment. Over 80–95 (YNTFPRGIKDPEDIIG) the chain is Extracellular. The helical transmembrane segment at 96–116 (ALSLIIYSLTLIPLLKYVFVV) threads the bilayer. Residues 117–184 (CKANDNGQGG…ENGTSRKNAL (68 aa)) lie on the Cytoplasmic side of the membrane. Residues 185–205 (LILVLVGTCMVIGDGILTPAI) form a helical membrane-spanning segment. At 206–217 (SVLSAAGGLRVN) the chain is on the extracellular side. A helical transmembrane segment spans residues 218-238 (LPHINNGIVVVVAVVILVSLF). At 239-248 (SVQHYGTDRV) the chain is on the cytoplasmic side. The chain crosses the membrane as a helical span at residues 249 to 269 (GWLFAPIVFLWFLFIASIGMF). Residues 270-298 (NIWKHDPSVLKAFSPVYIFRYFKRGGQDR) are Extracellular-facing. Residues 299 to 319 (WTSLGGIMLSITGIEALFADL) traverse the membrane as a helical segment. Residues 320 to 321 (SH) are Cytoplasmic-facing. Residues 322 to 342 (FPVSAVQFAFTVIVFPCLLLA) form a helical membrane-spanning segment. At 343-368 (YSGQAAYLRKYPHHVEDAFYQSIPKR) the chain is on the extracellular side. Residues 369–389 (VYWPMFIIATAAAIVASQATI) form a helical membrane-spanning segment. Residues 390–420 (SATFSLIKQALAHGCFPRVKVVHTSRKFLGQ) are Cytoplasmic-facing. The chain crosses the membrane as a helical span at residues 421 to 441 (IYVPDINWILMILCIAVTAGF). Over 442–453 (KNQNQIGNAYGT) the chain is Extracellular. Residues 454–474 (AVVIVMLVTTLLMMLIMILVW) form a helical membrane-spanning segment. The Cytoplasmic segment spans residues 475-480 (RCHWVL). The helical transmembrane segment at 481 to 501 (VLLFTLLSLVVECTYFSAVLF) threads the bilayer. Residues 502-505 (KVNQ) are Extracellular-facing. The chain crosses the membrane as a helical span at residues 506–526 (GGWVPLVIAAAFLVIMYVWHY). Residues 527-796 (GTLKRYEFEM…LLNVGQIFYV (270 aa)) lie on the Cytoplasmic side of the membrane.

Belongs to the HAK/KUP transporter (TC 2.A.72.3) family.

Its subcellular location is the cell membrane. Functionally, putative potassium transporter. This chain is Potassium transporter 10 (POT10), found in Arabidopsis thaliana (Mouse-ear cress).